The chain runs to 464 residues: MRCLGGSSLSRLLRMLSQSQGRALSSTGPAVYDVVISGGGMVGTAMACALGSDPHLQHKKVLLLEAGNRKPFDHLPENFSNRVSSITPGSATLLASFGAWDHILAMRLKPYKRMQVWDACSDALITFDKDALEDMGYIVENDIIIEALTKQLELMSDHVEVMYRSRALSYSWPPPYNNGKATPWVEIELADGQRLHTKLLIGADGHNSMVRSAAGMQSVQWNYNHAAVVATLHLSEATDNNVAWQRFLPTGPIALLPLSDTCSSLVWSTSPEHASELVSMDEESFVDTVNSAFWSNENHSEFITSAGSLLHSALSFFMPTGSSPRQLPPSVSRVEQNSRASFPLGLKHATEYIRHRVALIGDAAHRVHPLAGQGVNMGFGDVACLAHHLSQAAFNGSDLGSTKHLLEYETERQRHNLPLMAAVDLLKRLYNTKQPPIVLLRTLGLQATNALTPVKEQIMAFASK.

The N-terminal 24 residues, 1-24 (MRCLGGSSLSRLLRMLSQSQGRAL), are a transit peptide targeting the mitochondrion.

It belongs to the UbiH/COQ6 family. In terms of assembly, component of a multi-subunit COQ enzyme complex, composed of at least coq3, coq4, coq5, coq6, coq7 and coq9. Interacts with coq8b and coq7. FAD serves as cofactor.

The protein localises to the mitochondrion inner membrane. Its subcellular location is the golgi apparatus. It is found in the cell projection. The enzyme catalyses a 4-hydroxy-3-(all-trans-polyprenyl)benzoate + 2 reduced [2Fe-2S]-[ferredoxin] + O2 + 2 H(+) = a 3,4-dihydroxy-5-(all-trans-polyprenyl)benzoate + 2 oxidized [2Fe-2S]-[ferredoxin] + H2O. It catalyses the reaction a 2-methoxy-6-(all-trans-polyprenyl)phenol + 2 reduced [2Fe-2S]-[ferredoxin] + O2 + 2 H(+) = a 2-methoxy-6-(all-trans-polyprenyl)benzene-1,4-diol + 2 oxidized [2Fe-2S]-[ferredoxin] + H2O. Its pathway is cofactor biosynthesis; ubiquinone biosynthesis. In terms of biological role, FAD-dependent monooxygenase required for two non-consecutive steps during ubiquinone biosynthesis. Required for the C5-ring hydroxylation during ubiquinone biosynthesis by catalyzing the hydroxylation of 4-hydroxy-3-(all-trans-polyprenyl)benzoic acid to 3,4-dihydroxy-5-(all-trans-polyprenyl)benzoic acid. Also acts downstream of coq4, for the C1-hydroxylation during ubiquinone biosynthesis by catalyzing the hydroxylation of 2-methoxy-6-(all-trans-polyprenyl)phenol to 2-methoxy-6-(all-trans-polyprenyl)benzene-1,4-diol. The electrons required for the hydroxylation reaction are funneled indirectly to coq6 from NADPH via a ferredoxin/ferredoxin reductase system. This Xenopus tropicalis (Western clawed frog) protein is Ubiquinone biosynthesis monooxygenase COQ6, mitochondrial.